Reading from the N-terminus, the 475-residue chain is Fez family zinc finger protein 1 (475 aa).

Residues 28-43 carry the Engrailed homology 1 repressor motif; sequence PLAFSIERIMARTPEP. C2H2-type zinc fingers lie at residues 260 to 282, 288 to 310, 316 to 338, 344 to 366, 372 to 394, and 400 to 423; these read FTCEVCGKVFNAHYNLTRHMPVH, FVCKVCGKGFRQASTLCRHKIIH, HKCNQCGKAFNRSSTLNTHTRIH, FVCEFCGKGFHQKGNYKNHKLTH, FKCNICNKAFHQVYNLTFHMHTH, and FTCPTCGKGFCRNFDLKKHVRKLH. The interval 428–475 is disordered; that stretch reads GLARTPAGEPGTEPPPPLPQQPPMTLPPLQPPLPTPGPLQPGLHQGHQ. The span at 439-466 shows a compositional bias: pro residues; that stretch reads TEPPPPLPQQPPMTLPPLQPPLPTPGPL.

Belongs to the krueppel C2H2-type zinc-finger protein family. As to expression, expressed in brain. Little or no expression in other tissues. Overexpressed specifically in gastric cancers. A 2- to 20-fold increase is found in over 50% of gastric cancer tissues.

The protein resides in the nucleus. Functionally, transcription repressor. Involved in the axonal projection and proper termination of olfactory sensory neurons (OSN). Plays a role in rostro-caudal patterning of the diencephalon and in prethalamic formation. Expression is required in OSN to cell-autonomously regulate OSN axon projections. Regulates non-cell-autonomously the layer formation of the olfactory bulb development and the interneurons. May be required for correct rostral migration of the interneuron progenitors. The protein is Fez family zinc finger protein 1 (FEZF1) of Homo sapiens (Human).